The primary structure comprises 261 residues: 3-hydroxyacyl-CoA dehydrogenase type-2 (261 aa).

Ala-2 carries the N-acetylalanine modification. Residues Ser-20, Leu-22, and Asp-41 each contribute to the NAD(+) site. Residue Lys-53 is modified to N6-acetyllysine; alternate. An N6-succinyllysine; alternate modification is found at Lys-53. Val-65 serves as a coordination point for NAD(+). Lys-69 carries the N6-acetyllysine modification. Cys-91 serves as a coordination point for NAD(+). An N6-acetyllysine mark is found at Lys-99 and Lys-105. Ser-155 contributes to the substrate binding site. Residues Tyr-168, Lys-172, Phe-201, and Thr-203 each coordinate NAD(+). The active-site Proton acceptor is Tyr-168. At Lys-212 the chain carries N6-acetyllysine; alternate. Residue Lys-212 is modified to N6-succinyllysine; alternate.

It belongs to the short-chain dehydrogenases/reductases (SDR) family. As to quaternary structure, homotetramer. Component of mitochondrial ribonuclease P, a complex composed of TRMT10C/MRPP1, HSD17B10/MRPP2 and PRORP/MRPP3. Interacts with TRMT10C/MRPP1; forming the MRPP1-MRPP2 subcomplex of the mitochondrial ribonuclease P complex.

The protein resides in the mitochondrion. It is found in the mitochondrion matrix. It localises to the mitochondrion nucleoid. The enzyme catalyses a (3S)-3-hydroxyacyl-CoA + NAD(+) = a 3-oxoacyl-CoA + NADH + H(+). The catalysed reaction is (2S,3S)-3-hydroxy-2-methylbutanoyl-CoA + NAD(+) = 2-methyl-3-oxobutanoyl-CoA + NADH + H(+). It catalyses the reaction testosterone + NAD(+) = androst-4-ene-3,17-dione + NADH + H(+). It carries out the reaction 5alpha-androstane-3alpha,17beta-diol + NAD(+) = 17beta-hydroxy-5alpha-androstan-3-one + NADH + H(+). The enzyme catalyses 17beta-estradiol + NAD(+) = estrone + NADH + H(+). The catalysed reaction is cholate + NAD(+) = 3alpha,12alpha-dihydroxy-7-oxo-5beta-cholanate + NADH + H(+). It catalyses the reaction (3S)-3-hydroxybutanoyl-CoA + NAD(+) = acetoacetyl-CoA + NADH + H(+). It carries out the reaction (3S)-hydroxyoctanoyl-CoA + NAD(+) = 3-oxooctanoyl-CoA + NADH + H(+). The enzyme catalyses (3S)-hydroxyhexadecanoyl-CoA + NAD(+) = 3-oxohexadecanoyl-CoA + NADH + H(+). The catalysed reaction is 17beta-hydroxy-5alpha-androstan-3-one + NAD(+) = 5alpha-androstan-3,17-dione + NADH + H(+). It catalyses the reaction 5alpha-pregnan-20beta-ol-3-one + NAD(+) = 5alpha-pregnane-3,20-dione + NADH + H(+). It carries out the reaction 3alpha-hydroxy-5alpha-pregnan-20-one + NAD(+) = 5alpha-pregnane-3,20-dione + NADH + H(+). The enzyme catalyses cortisone + NAD(+) = 17alpha-hydroxypregn-4-en-3,11,20-trione-21-al + NADH + H(+). The catalysed reaction is 11-dehydrocorticosterone + NAD(+) = pregn-4-ene-3,11,20,21-tetraone + NADH + H(+). It catalyses the reaction cortisol + NAD(+) = 11beta,17alpha-dihydroxypregn-4-ene-3,20,21-trione + NADH + H(+). It carries out the reaction chenodeoxycholate + NAD(+) = 7-oxolithocholate + NADH + H(+). The enzyme catalyses ursodeoxycholate + NAD(+) = 7-oxolithocholate + NADH + H(+). The catalysed reaction is 3beta,7beta-dihydroxy-5beta-cholan-24-oate + NAD(+) = 3beta-hydroxy-7-oxo-5beta-cholan-24-oate + NADH + H(+). It functions in the pathway amino-acid degradation; L-isoleucine degradation. It participates in lipid metabolism; fatty acid beta-oxidation. Its pathway is steroid metabolism. The protein operates within lipid metabolism; bile acid biosynthesis. Its function is as follows. Mitochondrial dehydrogenase involved in pathways of fatty acid, branched-chain amino acid and steroid metabolism. Acts as (S)-3-hydroxyacyl-CoA dehydrogenase in mitochondrial fatty acid beta-oxidation, a major degradation pathway of fatty acids. Catalyzes the third step in the beta-oxidation cycle, namely the reversible conversion of (S)-3-hydroxyacyl-CoA to 3-ketoacyl-CoA. Preferentially accepts straight medium- and short-chain acyl-CoA substrates with highest efficiency for (3S)-hydroxybutanoyl-CoA. Acts as 3-hydroxy-2-methylbutyryl-CoA dehydrogenase in branched-chain amino acid catabolic pathway. Catalyzes the oxidation of 3-hydroxy-2-methylbutanoyl-CoA into 2-methyl-3-oxobutanoyl-CoA, a step in isoleucine degradation pathway. Has hydroxysteroid dehydrogenase activity toward steroid hormones and bile acids. Catalyzes the oxidation of 3alpha-, 17beta-, 20beta- and 21-hydroxysteroids and 7alpha- and 7beta-hydroxy bile acids. Oxidizes allopregnanolone/brexanolone at the 3alpha-hydroxyl group, which is known to be critical for the activation of gamma-aminobutyric acid receptors (GABAARs) chloride channel. Has phospholipase C-like activity toward cardiolipin and its oxidized species. Likely oxidizes the 2'-hydroxyl in the head group of cardiolipin to form a ketone intermediate that undergoes nucleophilic attack by water and fragments into diacylglycerol, dihydroxyacetone and orthophosphate. Has higher affinity for cardiolipin with oxidized fatty acids and may degrade these species during the oxidative stress response to protect cells from apoptosis. By interacting with intracellular amyloid-beta, it may contribute to the neuronal dysfunction associated with Alzheimer disease (AD). Essential for structural and functional integrity of mitochondria. In terms of biological role, in addition to mitochondrial dehydrogenase activity, moonlights as a component of mitochondrial ribonuclease P, a complex that cleaves tRNA molecules in their 5'-ends. Together with TRMT10C/MRPP1, forms a subcomplex of the mitochondrial ribonuclease P, named MRPP1-MRPP2 subcomplex, which displays functions that are independent of the ribonuclease P activity. The MRPP1-MRPP2 subcomplex catalyzes the formation of N(1)-methylguanine and N(1)-methyladenine at position 9 (m1G9 and m1A9, respectively) in tRNAs; HSD17B10/MRPP2 acting as a non-catalytic subunit. The MRPP1-MRPP2 subcomplex also acts as a tRNA maturation platform: following 5'-end cleavage by the mitochondrial ribonuclease P complex, the MRPP1-MRPP2 subcomplex enhances the efficiency of 3'-processing catalyzed by ELAC2, retains the tRNA product after ELAC2 processing and presents the nascent tRNA to the mitochondrial CCA tRNA nucleotidyltransferase TRNT1 enzyme. Associates with mitochondrial DNA complexes at the nucleoids to initiate RNA processing and ribosome assembly. This chain is 3-hydroxyacyl-CoA dehydrogenase type-2 (Hsd17b10), found in Rattus norvegicus (Rat).